Here is a 365-residue protein sequence, read N- to C-terminus: UDP-N-acetylglucosamine--N-acetylmuramyl-(pentapeptide) pyrophosphoryl-undecaprenol N-acetylglucosamine transferase (365 aa).

UDP-N-acetyl-alpha-D-glucosamine contacts are provided by residues 10–12, Asn128, Arg170, Ser199, Ile250, and Gln295; that span reads TGG.

It belongs to the glycosyltransferase 28 family. MurG subfamily.

It localises to the cell inner membrane. The enzyme catalyses di-trans,octa-cis-undecaprenyl diphospho-N-acetyl-alpha-D-muramoyl-L-alanyl-D-glutamyl-meso-2,6-diaminopimeloyl-D-alanyl-D-alanine + UDP-N-acetyl-alpha-D-glucosamine = di-trans,octa-cis-undecaprenyl diphospho-[N-acetyl-alpha-D-glucosaminyl-(1-&gt;4)]-N-acetyl-alpha-D-muramoyl-L-alanyl-D-glutamyl-meso-2,6-diaminopimeloyl-D-alanyl-D-alanine + UDP + H(+). Its pathway is cell wall biogenesis; peptidoglycan biosynthesis. Cell wall formation. Catalyzes the transfer of a GlcNAc subunit on undecaprenyl-pyrophosphoryl-MurNAc-pentapeptide (lipid intermediate I) to form undecaprenyl-pyrophosphoryl-MurNAc-(pentapeptide)GlcNAc (lipid intermediate II). The polypeptide is UDP-N-acetylglucosamine--N-acetylmuramyl-(pentapeptide) pyrophosphoryl-undecaprenol N-acetylglucosamine transferase (Prosthecochloris aestuarii (strain DSM 271 / SK 413)).